The chain runs to 88 residues: UPF0250 protein IL0958 (88 aa).

Belongs to the UPF0250 family.

This chain is UPF0250 protein IL0958, found in Idiomarina loihiensis (strain ATCC BAA-735 / DSM 15497 / L2-TR).